The following is a 278-amino-acid chain: Large ribosomal subunit protein uL2 (278 aa).

The tract at residues 222–278 (GVVMNPIDHPHGGGEGRTSGGRHPVTPWGKPTKGKKTRSNKSTDKFILISRHKRKKK) is disordered.

This sequence belongs to the universal ribosomal protein uL2 family. Part of the 50S ribosomal subunit. Forms a bridge to the 30S subunit in the 70S ribosome.

Its function is as follows. One of the primary rRNA binding proteins. Required for association of the 30S and 50S subunits to form the 70S ribosome, for tRNA binding and peptide bond formation. It has been suggested to have peptidyltransferase activity; this is somewhat controversial. Makes several contacts with the 16S rRNA in the 70S ribosome. This chain is Large ribosomal subunit protein uL2, found in Rhodopseudomonas palustris (strain BisB5).